Here is a 197-residue protein sequence, read N- to C-terminus: Dephospho-CoA kinase (197 aa).

The DPCK domain occupies 3 to 197; sequence VYGLTGGIGS…QSLLHTHQNT (195 aa). 11–16 is an ATP binding site; the sequence is GSGKTT.

It belongs to the CoaE family.

The protein localises to the cytoplasm. The catalysed reaction is 3'-dephospho-CoA + ATP = ADP + CoA + H(+). Its pathway is cofactor biosynthesis; coenzyme A biosynthesis; CoA from (R)-pantothenate: step 5/5. Functionally, catalyzes the phosphorylation of the 3'-hydroxyl group of dephosphocoenzyme A to form coenzyme A. The polypeptide is Dephospho-CoA kinase (Hydrogenovibrio crunogenus (strain DSM 25203 / XCL-2) (Thiomicrospira crunogena)).